A 229-amino-acid chain; its full sequence is UPF0173 metal-dependent hydrolase SAR1785 (229 aa).

It belongs to the UPF0173 family.

This is UPF0173 metal-dependent hydrolase SAR1785 from Staphylococcus aureus (strain MRSA252).